Here is a 209-residue protein sequence, read N- to C-terminus: Chaperone protein TorD (209 aa).

This sequence belongs to the TorD/DmsD family. TorD subfamily.

It is found in the cytoplasm. In terms of biological role, involved in the biogenesis of TorA. Acts on TorA before the insertion of the molybdenum cofactor and, as a result, probably favors a conformation of the apoenzyme that is competent for acquiring the cofactor. In Shewanella sp. (strain ANA-3), this protein is Chaperone protein TorD.